Here is a 269-residue protein sequence, read N- to C-terminus: Ribonuclease HII (269 aa).

The RNase H type-2 domain maps to 83 to 269 (YLIAGVDEVG…HRMSFLTNIL (187 aa)). Residues Asp-89, Glu-90, and Asp-185 each contribute to the a divalent metal cation site.

Belongs to the RNase HII family. The cofactor is Mn(2+). Mg(2+) serves as cofactor.

It localises to the cytoplasm. It carries out the reaction Endonucleolytic cleavage to 5'-phosphomonoester.. Its function is as follows. Endonuclease that specifically degrades the RNA of RNA-DNA hybrids. The chain is Ribonuclease HII from Clostridium botulinum (strain ATCC 19397 / Type A).